Consider the following 223-residue polypeptide: Nicotinamide/nicotinic acid mononucleotide adenylyltransferase 2 (223 aa).

NAD(+)-binding residues include Ser-11 and Phe-12. Residue His-19 coordinates ATP. 7 residues coordinate NAD(+): Trp-87, Thr-90, Gly-116, Asp-118, Leu-133, Trp-134, and Arg-153. Position 190 to 191 (190 to 191 (TR)) interacts with ATP.

The protein belongs to the eukaryotic NMN adenylyltransferase family. The cofactor is a divalent metal cation.

It carries out the reaction beta-nicotinamide D-ribonucleotide + ATP + H(+) = diphosphate + NAD(+). The enzyme catalyses nicotinate beta-D-ribonucleotide + ATP + H(+) = deamido-NAD(+) + diphosphate. It functions in the pathway cofactor biosynthesis; NAD(+) biosynthesis; deamido-NAD(+) from nicotinate D-ribonucleotide: step 1/1. The protein operates within cofactor biosynthesis; NAD(+) biosynthesis; NAD(+) from nicotinamide D-ribonucleotide: step 1/1. In terms of biological role, catalyzes the formation of NAD(+) from nicotinamide mononucleotide (NMN) and ATP. Can also use the deamidated form; nicotinic acid mononucleotide (NaMN) as substrate. The protein is Nicotinamide/nicotinic acid mononucleotide adenylyltransferase 2 of Caenorhabditis elegans.